The primary structure comprises 459 residues: Exodeoxyribonuclease 7 large subunit (459 aa).

The protein belongs to the XseA family. As to quaternary structure, heterooligomer composed of large and small subunits.

Its subcellular location is the cytoplasm. It carries out the reaction Exonucleolytic cleavage in either 5'- to 3'- or 3'- to 5'-direction to yield nucleoside 5'-phosphates.. Functionally, bidirectionally degrades single-stranded DNA into large acid-insoluble oligonucleotides, which are then degraded further into small acid-soluble oligonucleotides. The protein is Exodeoxyribonuclease 7 large subunit of Pseudomonas savastanoi pv. phaseolicola (strain 1448A / Race 6) (Pseudomonas syringae pv. phaseolicola (strain 1448A / Race 6)).